A 297-amino-acid chain; its full sequence is Probable endonuclease 4 (297 aa).

His-69, His-110, Glu-145, Asp-179, His-182, His-214, Asp-227, His-229, and Glu-259 together coordinate Zn(2+).

Belongs to the AP endonuclease 2 family. Zn(2+) is required as a cofactor.

The catalysed reaction is Endonucleolytic cleavage to 5'-phosphooligonucleotide end-products.. Endonuclease IV plays a role in DNA repair. It cleaves phosphodiester bonds at apurinic or apyrimidinic (AP) sites, generating a 3'-hydroxyl group and a 5'-terminal sugar phosphate. In Bacillus licheniformis (strain ATCC 14580 / DSM 13 / JCM 2505 / CCUG 7422 / NBRC 12200 / NCIMB 9375 / NCTC 10341 / NRRL NRS-1264 / Gibson 46), this protein is Probable endonuclease 4.